The sequence spans 132 residues: ATP synthase epsilon chain (132 aa).

This sequence belongs to the ATPase epsilon chain family. In terms of assembly, F-type ATPases have 2 components, CF(1) - the catalytic core - and CF(0) - the membrane proton channel. CF(1) has five subunits: alpha(3), beta(3), gamma(1), delta(1), epsilon(1). CF(0) has three main subunits: a, b and c.

Its subcellular location is the cell membrane. In terms of biological role, produces ATP from ADP in the presence of a proton gradient across the membrane. In Desulfitobacterium hafniense (strain Y51), this protein is ATP synthase epsilon chain.